The following is a 135-amino-acid chain: ATP synthase epsilon chain (135 aa).

The protein belongs to the ATPase epsilon chain family. In terms of assembly, F-type ATPases have 2 components, CF(1) - the catalytic core - and CF(0) - the membrane proton channel. CF(1) has five subunits: alpha(3), beta(3), gamma(1), delta(1), epsilon(1). CF(0) has three main subunits: a, b and c.

It is found in the cell inner membrane. In terms of biological role, produces ATP from ADP in the presence of a proton gradient across the membrane. In Rhodopseudomonas palustris (strain BisA53), this protein is ATP synthase epsilon chain.